We begin with the raw amino-acid sequence, 323 residues long: 4-hydroxyphenylpyruvate 3-dimethylallyltransferase (323 aa).

Substrate is bound by residues Arg160 and Glu281.

Belongs to the aromatic prenyltransferase family. Monomer.

Its subcellular location is the cytoplasm. The enzyme catalyses 3-(4-hydroxyphenyl)pyruvate + dimethylallyl diphosphate = 3-dimethylallyl-4-hydroxyphenylpyruvate + diphosphate. The protein operates within antibiotic biosynthesis; novobiocin biosynthesis. Functionally, magnesium-independent aromatic prenyltransferase that catalyzes the irreversible transfer of a dimethylallyl group to 4-hydroxyphenylpyruvate to produce the ring A structure in the novobiocin biosynthesis pathway. Novobiocin is an aminocoumarin family antibiotic that targets bacterial DNA gyrases. It is able to prenylate many different compounds, including the phenylpropanoids 4-coumarate and caffeate, the plant polyketide resveratrol, the (iso)flavonoid naringenin, apigenin, daidzein and genistein, and the dihydroxynaphthalenes 1,6-DHN and 2,7-DHN. This Streptomyces niveus (Streptomyces spheroides) protein is 4-hydroxyphenylpyruvate 3-dimethylallyltransferase.